Here is a 378-residue protein sequence, read N- to C-terminus: MGGDKENLDLSDLNASLPAAAAALSAEDRAGLVNALKDKLQSLAGQHTDVLEALSPNVRKRVEYLREIQGQHDEIELKFFEERAALEAKYQKLYEPLYTKRYNIVNGVVEVDGGNDEPASENAAEGKDADAKGVPDFWLTAMKTNEVLSEEIQERDEPALKYLKDIKWARIDDPKGFKLDFFFDTNPFFKNSVLTKTYHMVDEDEPILEKAIGTEIEWYPGKNLTQKILKKKPKKGSKNAKPITKTEVCESFFNFFSPPQVPDDDEDIDEDTADELQGQMEHDYDIGTTIRDKIIPHAVSWFTGEAVQAEDFDDMEDDEEDDEDDDEDEEEEEEDEDEDEDDEEEKSKPKKKSAGKPKLPSKGGAQGGADQPADCKQQ.

Residues 33–87 (VNALKDKLQSLAGQHTDVLEALSPNVRKRVEYLREIQGQHDEIELKFFEERAALE) adopt a coiled-coil conformation. A Nuclear export signal motif is present at residues 54-69 (LSPNVRKRVEYLREIQ). Residues 230–235 (KKKPKK) carry the Nuclear localization signal motif. The interval 306–378 (AVQAEDFDDM…ADQPADCKQQ (73 aa)) is disordered. Over residues 308 to 344 (QAEDFDDMEDDEEDDEDDDEDEEEEEEDEDEDEDDEE) the composition is skewed to acidic residues. A Nuclear localization signal motif is present at residues 348-352 (KPKKK). Over residues 356-378 (KPKLPSKGGAQGGADQPADCKQQ) the composition is skewed to low complexity. A Cysteine methyl ester modification is found at Cys375. The S-farnesyl cysteine moiety is linked to residue Cys375. Residues 376–378 (KQQ) constitute a propeptide, removed in mature form.

The protein belongs to the nucleosome assembly protein (NAP) family.

It is found in the nucleus. Its subcellular location is the cytoplasm. Its function is as follows. May modulate chromatin structure by regulation of nucleosome assembly/disassembly. This chain is Nucleosome assembly protein 1;1 (NAP1;1), found in Oryza sativa subsp. japonica (Rice).